We begin with the raw amino-acid sequence, 551 residues long: FGGY carbohydrate kinase domain-containing protein (551 aa).

This sequence belongs to the FGGY kinase family. Expressed in kidney, lung and small intestine and to a lower extent in liver and detected in cerebrospinal fluid (at protein level).

It catalyses the reaction D-ribulose + ATP = D-ribulose 5-phosphate + ADP + H(+). The protein operates within carbohydrate metabolism; pentose and glucuronate interconversion. In terms of biological role, catalyzes ATP-dependent phosphorylation of D-ribulose at C-5 to form D-ribulose 5-phosphate. Postulated to function in a metabolite repair mechanism by preventing toxic accumulation of free D-ribulose formed by non-specific phosphatase activities. Alternatively, may play a role in regulating D-ribulose 5-phosphate recycling in the pentose phosphate pathway. Can phosphorylate ribitol with low efficiency. In Homo sapiens (Human), this protein is FGGY carbohydrate kinase domain-containing protein.